Consider the following 285-residue polypeptide: Undecaprenyl-diphosphatase (285 aa).

7 consecutive transmembrane segments (helical) span residues 3–23 (ILLL…EFLP), 41–61 (GEIV…AVIW), 87–107 (LLIA…LIKE), 109–129 (LFHP…ILWV), 197–217 (TEFS…YSLI), 226–246 (GDLP…LVCI), and 260–280 (VFAW…WGGW).

This sequence belongs to the UppP family.

Its subcellular location is the cell inner membrane. It carries out the reaction di-trans,octa-cis-undecaprenyl diphosphate + H2O = di-trans,octa-cis-undecaprenyl phosphate + phosphate + H(+). Catalyzes the dephosphorylation of undecaprenyl diphosphate (UPP). Confers resistance to bacitracin. This chain is Undecaprenyl-diphosphatase, found in Methylibium petroleiphilum (strain ATCC BAA-1232 / LMG 22953 / PM1).